The following is a 94-amino-acid chain: Cell division protein FtsB (94 aa).

At Met1–Trp8 the chain is on the cytoplasmic side. A helical membrane pass occupies residues Leu9–Val26. The Periplasmic portion of the chain corresponds to Gly27–Lys94. The stretch at Leu31–His78 forms a coiled coil.

This sequence belongs to the FtsB family. In terms of assembly, part of a complex composed of FtsB, FtsL and FtsQ.

The protein resides in the cell inner membrane. Its function is as follows. Essential cell division protein. May link together the upstream cell division proteins, which are predominantly cytoplasmic, with the downstream cell division proteins, which are predominantly periplasmic. The chain is Cell division protein FtsB from Pseudomonas aeruginosa (strain ATCC 15692 / DSM 22644 / CIP 104116 / JCM 14847 / LMG 12228 / 1C / PRS 101 / PAO1).